The primary structure comprises 1237 residues: Phosphorylase b kinase regulatory subunit alpha, skeletal muscle isoform (1237 aa).

Phosphoserine occurs at positions 629, 729, 735, and 758. Positions 810–840 are calmodulin-binding; that stretch reads LTELYGKVGKIRHWGLIRYISGILRKKVEAL. At S972 the chain carries Phosphoserine; by autocatalysis. S981 carries the phosphoserine modification. 2 positions are modified to phosphoserine; by autocatalysis: S985 and S1007. Residue S1018 is modified to Phosphoserine; by PKA. Phosphoserine occurs at positions 1020, 1023, and 1030. The disordered stretch occupies residues 1021 to 1069; the sequence is TESQPNGGHSLGADLMSPSFLSPGTSVTPSSGSFPGHHTSKDSRQGQWQ. The segment covering 1042-1056 has biased composition (low complexity); sequence SPGTSVTPSSGSFPG. The interval 1060-1100 is calmodulin-binding; the sequence is SKDSRQGQWQRRRRLDGALNRVPIGFYQKVWKVLQKCHGLS. S1127 carries the post-translational modification Phosphoserine. Residue C1234 is the site of S-farnesyl cysteine attachment.

It belongs to the phosphorylase b kinase regulatory chain family. In terms of assembly, hexadecamer of 4 heterotetramers, each composed of alpha, beta, gamma, and delta subunits. Alpha (PHKA1 or PHKA2) and beta (PHKB) are regulatory subunits, gamma (PHKG1 or PHKG2) is the catalytic subunit, and delta is calmodulin. Post-translationally, phosphorylation of Ser-1018 by PKA stimulates the dephosphorylation of the beta subunit and, thus, reverses the initial stimulation of PHK by the faster beta-subunit phosphorylation by PKA, that occurs in muscle in response to adrenaline. Cys-1234 is farnesylated, but the C-terminal tripeptide is not removed and the cysteine carboxyl is not methylated. As to expression, isoform 1 predominates in muscle, heart, brain and testis. Isoforms 1 and 2 are expressed in similar quantities in the other tissues. Isoform 3 is highly expressed in slow muscle and heart.

It is found in the cell membrane. Its pathway is glycan biosynthesis; glycogen metabolism. By phosphorylation of various serine residues and by calcium. In terms of biological role, phosphorylase b kinase catalyzes the phosphorylation of serine in certain substrates, including troponin I. The alpha chain may bind calmodulin. The sequence is that of Phosphorylase b kinase regulatory subunit alpha, skeletal muscle isoform (PHKA1) from Oryctolagus cuniculus (Rabbit).